Consider the following 239-residue polypeptide: 1-(5-phosphoribosyl)-5-[(5-phosphoribosylamino)methylideneamino] imidazole-4-carboxamide isomerase (239 aa).

Residue D8 is the Proton acceptor of the active site. The active-site Proton donor is the D129.

It belongs to the HisA/HisF family.

It is found in the cytoplasm. The enzyme catalyses 1-(5-phospho-beta-D-ribosyl)-5-[(5-phospho-beta-D-ribosylamino)methylideneamino]imidazole-4-carboxamide = 5-[(5-phospho-1-deoxy-D-ribulos-1-ylimino)methylamino]-1-(5-phospho-beta-D-ribosyl)imidazole-4-carboxamide. It functions in the pathway amino-acid biosynthesis; L-histidine biosynthesis; L-histidine from 5-phospho-alpha-D-ribose 1-diphosphate: step 4/9. The protein is 1-(5-phosphoribosyl)-5-[(5-phosphoribosylamino)methylideneamino] imidazole-4-carboxamide isomerase of Bacillus thuringiensis subsp. konkukian (strain 97-27).